Consider the following 384-residue polypeptide: MTEGVGLPLWLLAELTYRCPLQCPYCSNPLDYAQHKNELTTQEWFDVFDQARQMGAVQLGFSGGEPLVRQDLEQLVAHAHQQGFYTNLITSGMGLTEQRIADLKQAGLDHIQVSFQASDPVVNDALAGSKHAFEQKYEMCRLVKKYDYPMVLNFVIHRHNIDQIEQIIELCLELNADTVELAICQFYGWAFLNRQGLLPTQEQLTRAERITNEYREKLKAQNHPCKLIFVVPDYYEERPKACMNGWGKIFFTVAPDGMALPCHAARQLPISFPNVREHKLSDIWYKSTGFNHFRGDAWMPEGCRSCPDKDRDFGGCRCQAYMLTGDAANADPVCGKSPYHQMIEQARAESQLVAPLQNLVFRNSRNSKSLSATQNIPVHTITDI.

Residues 5–220 (VGLPLWLLAE…TNEYREKLKA (216 aa)) enclose the Radical SAM core domain. 3 residues coordinate [4Fe-4S] cluster: Cys19, Cys23, and Cys26.

Belongs to the radical SAM superfamily. PqqE family. Interacts with PqqD. The interaction is necessary for activity of PqqE. Requires [4Fe-4S] cluster as cofactor.

It carries out the reaction [PQQ precursor protein] + S-adenosyl-L-methionine = E-Y cross-linked-[PQQ precursor protein] + 5'-deoxyadenosine + L-methionine + H(+). It participates in cofactor biosynthesis; pyrroloquinoline quinone biosynthesis. Functionally, catalyzes the cross-linking of a glutamate residue and a tyrosine residue in the PqqA protein as part of the biosynthesis of pyrroloquinoline quinone (PQQ). This Acinetobacter calcoaceticus protein is PqqA peptide cyclase (pqqE).